Consider the following 264-residue polypeptide: Endonuclease V (264 aa).

Residues D72 and D137 each coordinate Mg(2+).

This sequence belongs to the endonuclease V family. Requires Mg(2+) as cofactor.

The protein localises to the cytoplasm. It catalyses the reaction Endonucleolytic cleavage at apurinic or apyrimidinic sites to products with a 5'-phosphate.. DNA repair enzyme involved in the repair of deaminated bases. Selectively cleaves double-stranded DNA at the second phosphodiester bond 3' to a deoxyinosine leaving behind the intact lesion on the nicked DNA. The sequence is that of Endonuclease V from Halobacterium salinarum (strain ATCC 700922 / JCM 11081 / NRC-1) (Halobacterium halobium).